The primary structure comprises 203 residues: Histidine biosynthesis bifunctional protein HisIE (203 aa).

The phosphoribosyl-AMP cyclohydrolase stretch occupies residues 1-114; it reads MLTEQQRREL…FGDTAHQWLF (114 aa). The phosphoribosyl-ATP pyrophosphohydrolase stretch occupies residues 115–203; that stretch reads LYQLEQLLAE…VIENLRKRHQ (89 aa).

It in the N-terminal section; belongs to the PRA-CH family. The protein in the C-terminal section; belongs to the PRA-PH family.

It is found in the cytoplasm. The enzyme catalyses 1-(5-phospho-beta-D-ribosyl)-ATP + H2O = 1-(5-phospho-beta-D-ribosyl)-5'-AMP + diphosphate + H(+). It carries out the reaction 1-(5-phospho-beta-D-ribosyl)-5'-AMP + H2O = 1-(5-phospho-beta-D-ribosyl)-5-[(5-phospho-beta-D-ribosylamino)methylideneamino]imidazole-4-carboxamide. It participates in amino-acid biosynthesis; L-histidine biosynthesis; L-histidine from 5-phospho-alpha-D-ribose 1-diphosphate: step 2/9. The protein operates within amino-acid biosynthesis; L-histidine biosynthesis; L-histidine from 5-phospho-alpha-D-ribose 1-diphosphate: step 3/9. The protein is Histidine biosynthesis bifunctional protein HisIE (hisI) of Escherichia coli (strain K12).